Reading from the N-terminus, the 255-residue chain is Trypsin alpha-4 (255 aa).

A signal peptide spans 1–16; the sequence is MLKFVVLLCAISCALG. The propeptide at 17 to 30 is activation peptide; it reads AAVPEGMVPQLDGR. Positions 31-253 constitute a Peptidase S1 domain; sequence IVGGVATTIS…LRTWVVSAAS (223 aa). A disulfide bridge connects residues cysteine 56 and cysteine 72. Active-site charge relay system residues include histidine 71 and aspartate 116. Cystine bridges form between cysteine 179–cysteine 196 and cysteine 205–cysteine 229. Serine 209 serves as the catalytic Charge relay system.

It belongs to the peptidase S1 family.

It is found in the secreted. The protein localises to the extracellular space. It carries out the reaction Preferential cleavage: Arg-|-Xaa, Lys-|-Xaa.. The polypeptide is Trypsin alpha-4 (Lucilia cuprina (Green bottle fly)).